The following is a 457-amino-acid chain: Omega-hydroxypalmitate O-feruloyl transferase (457 aa).

Residues His-184 and Asp-404 each act as proton acceptor in the active site.

Belongs to the plant acyltransferase family. In terms of tissue distribution, expressed in roots, seedlings, leaves, stems, flowers and siliques. Detected at the protein level in roots and in seed coats.

The catalysed reaction is 16-hydroxyhexadecanoate + (E)-feruloyl-CoA = 16-feruloyloxyhexadecanoate + CoA. Its function is as follows. Involved in the synthesis of aromatics of the suberin polymer. Specifically affects the accumulation of the ferulate constituent of suberin in roots and seeds, but has no effect on the content of p-coumarate or sinapate. The protein is Omega-hydroxypalmitate O-feruloyl transferase (HHT1) of Arabidopsis thaliana (Mouse-ear cress).